Consider the following 146-residue polypeptide: Globin-2B (146 aa).

The 138-residue stretch at 9-146 (QLTADVKKDL…KLVGVVQAAL (138 aa)) folds into the Globin domain. His101 is a heme b binding site.

Belongs to the globin family. Homodimer.

The chain is Globin-2B from Anadara trapezia (Sydney cockle).